The chain runs to 351 residues: Photosystem II D2 protein (351 aa).

A helical transmembrane segment spans residues 39–59; the sequence is TAYLAIGGWLTGTTFVTSWYT. His116 is a binding site for chlorophyll a. Residues 123-139 traverse the membrane as a helical segment; sequence GFMLRQFEIARLVGIRP. Positions 128 and 141 each coordinate pheophytin a. Residues 151-164 traverse the membrane as a helical segment; it reads VFVSVFLMYPLGQS. Chlorophyll a is bound at residue His196. A helical transmembrane segment spans residues 206–226; it reads GALLCAIHGATVENTLFEDGE. Residues His213 and Phe260 each coordinate a plastoquinone. His213 is a binding site for Fe cation. His267 is a binding site for Fe cation. Residues 277 to 293 traverse the membrane as a helical segment; sequence GLWTSSIGIIGLALNLR.

The protein belongs to the reaction center PufL/M/PsbA/D family. As to quaternary structure, PSII is composed of 1 copy each of membrane proteins PsbA, PsbB, PsbC, PsbD, PsbE, PsbF, PsbH, PsbI, PsbJ, PsbK, PsbL, PsbM, PsbT, PsbX, PsbY, PsbZ, Psb30/Ycf12, peripheral proteins PsbO, CyanoQ (PsbQ), PsbU, PsbV and a large number of cofactors. It forms dimeric complexes. The cofactor is The D1/D2 heterodimer binds P680, chlorophylls that are the primary electron donor of PSII, and subsequent electron acceptors. It shares a non-heme iron and each subunit binds pheophytin, quinone, additional chlorophylls, carotenoids and lipids. There is also a Cl(-1) ion associated with D1 and D2, which is required for oxygen evolution. The PSII complex binds additional chlorophylls, carotenoids and specific lipids..

Its subcellular location is the cellular thylakoid membrane. It carries out the reaction 2 a plastoquinone + 4 hnu + 2 H2O = 2 a plastoquinol + O2. Functionally, photosystem II (PSII) is a light-driven water:plastoquinone oxidoreductase that uses light energy to abstract electrons from H(2)O, generating O(2) and a proton gradient subsequently used for ATP formation. It consists of a core antenna complex that captures photons, and an electron transfer chain that converts photonic excitation into a charge separation. The D1/D2 (PsbA/PsbD) reaction center heterodimer binds P680, the primary electron donor of PSII as well as several subsequent electron acceptors. D2 is needed for assembly of a stable PSII complex. The chain is Photosystem II D2 protein from Parasynechococcus marenigrum (strain WH8102).